A 470-amino-acid polypeptide reads, in one-letter code: Putative dipeptidase TSTA_079200 (470 aa).

Residues 40-60 (AWLFGLGTLGIILASVLLNPF) traverse the membrane as a helical segment. Zn(2+)-binding residues include histidine 92 and aspartate 94. A disulfide bridge connects residues cysteine 143 and cysteine 237. Asparagine 188 is a glycosylation site (N-linked (GlcNAc...) asparagine). Glutamate 208 is a Zn(2+) binding site. Residue histidine 235 participates in substrate binding. Histidine 279 and histidine 300 together coordinate Zn(2+). Positions 311 and 371 each coordinate substrate.

This sequence belongs to the metallo-dependent hydrolases superfamily. Peptidase M19 family. Requires Zn(2+) as cofactor.

Its subcellular location is the membrane. It carries out the reaction an L-aminoacyl-L-amino acid + H2O = 2 an L-alpha-amino acid. Its function is as follows. Hydrolyzes a wide range of dipeptides. In Talaromyces stipitatus (strain ATCC 10500 / CBS 375.48 / QM 6759 / NRRL 1006) (Penicillium stipitatum), this protein is Putative dipeptidase TSTA_079200.